A 1038-amino-acid polypeptide reads, in one-letter code: SEH-associated protein 4 (1038 aa).

A WD 1 repeat occupies 50 to 90 (KDFGSITCLDYSESEIGMIGVGEKNGYLRIFNISGQNSSSP). Phosphoserine occurs at positions 123 and 136. WD repeat units follow at residues 147 to 189 (KKQR…DSHE), 235 to 276 (QHPT…DQAS), and 544 to 587 (NTWR…SNQD).

Belongs to the WD repeat mio family. Component of the SEA complex composed of at least IML1/SEA1, RTC1/SEA2, MTC5/SEA3, NPR2, NPR3, SEA4, SEC13 and SEH1.

It is found in the cytoplasm. It localises to the vacuole membrane. Component of the SEA complex which coats the vacuolar membrane and is involved in intracellular trafficking, autophagy, response to nitrogen starvation, and amino acid biogenesis. The chain is SEH-associated protein 4 (SEA4) from Saccharomyces cerevisiae (strain ATCC 204508 / S288c) (Baker's yeast).